A 379-amino-acid chain; its full sequence is Bifunctional enzyme IspD/IspF (379 aa).

Residues 1 to 213 form a 2-C-methyl-D-erythritol 4-phosphate cytidylyltransferase region; sequence MSQVSLVVMG…QGFEPPFGGC (213 aa). Positions 214–379 are 2-C-methyl-D-erythritol 2,4-cyclodiphosphate synthase; it reads YGGSGFDVHA…DWTKHACFNR (166 aa). 2 residues coordinate a divalent metal cation: aspartate 220 and histidine 222. Residues 220–222 and 246–247 contribute to the 4-CDP-2-C-methyl-D-erythritol 2-phosphate site; these read DVH and HS. Histidine 254 is a binding site for a divalent metal cation. 4-CDP-2-C-methyl-D-erythritol 2-phosphate contacts are provided by residues 268–270, 273–277, 344–347, phenylalanine 351, and arginine 354; these read DIG, FPDSD, and TTTE.

It in the N-terminal section; belongs to the IspD/TarI cytidylyltransferase family. IspD subfamily. The protein in the C-terminal section; belongs to the IspF family. It depends on a divalent metal cation as a cofactor.

The enzyme catalyses 2-C-methyl-D-erythritol 4-phosphate + CTP + H(+) = 4-CDP-2-C-methyl-D-erythritol + diphosphate. The catalysed reaction is 4-CDP-2-C-methyl-D-erythritol 2-phosphate = 2-C-methyl-D-erythritol 2,4-cyclic diphosphate + CMP. Its pathway is isoprenoid biosynthesis; isopentenyl diphosphate biosynthesis via DXP pathway; isopentenyl diphosphate from 1-deoxy-D-xylulose 5-phosphate: step 2/6. The protein operates within isoprenoid biosynthesis; isopentenyl diphosphate biosynthesis via DXP pathway; isopentenyl diphosphate from 1-deoxy-D-xylulose 5-phosphate: step 4/6. Bifunctional enzyme that catalyzes the formation of 4-diphosphocytidyl-2-C-methyl-D-erythritol from CTP and 2-C-methyl-D-erythritol 4-phosphate (MEP) (IspD), and catalyzes the conversion of 4-diphosphocytidyl-2-C-methyl-D-erythritol 2-phosphate (CDP-ME2P) to 2-C-methyl-D-erythritol 2,4-cyclodiphosphate (ME-CPP) with a corresponding release of cytidine 5-monophosphate (CMP) (IspF). The sequence is that of Bifunctional enzyme IspD/IspF from Wolinella succinogenes (strain ATCC 29543 / DSM 1740 / CCUG 13145 / JCM 31913 / LMG 7466 / NCTC 11488 / FDC 602W) (Vibrio succinogenes).